A 732-amino-acid chain; its full sequence is Cyclopenase asqI (732 aa).

3 residues coordinate Zn(2+): His-168, His-172, and His-200.

This sequence belongs to the tyrosinase family. The cofactor is Zn(2+).

The enzyme catalyses (-)-cyclopenine = viridicatin + methyl isocyanate + H(+). It catalyses the reaction (-)-4'-methoxycyclopenine = 4'-methoxyviridicatin + methyl isocyanate + H(+). The protein operates within secondary metabolite biosynthesis. Its pathway is alkaloid biosynthesis. It participates in mycotoxin biosynthesis. Functionally, cyclopenase; part of the gene cluster that mediates the biosynthesis of the aspoquinolone mycotoxins. Within the pathway, the cyclopenase asqI catalyzes the conversion of 4'-methoxycyclopenin into 4'-methoxyviridicatin. Cyclopenin can also be converted into viridicatin by asqI. The first step of the pathway is catalyzed by the nonribosomal peptide synthetase asqK that condenses anthranilic acid and O-methyl-L-tyrosine to produce 4'-methoxycyclopeptin. 4'-methoxycyclopeptin is then converted to 4'-methoxydehydrocyclopeptin by the ketoglutarate-dependent dioxygenase asqJ. AsqJ also converts its first product 4'-methoxydehydrocyclopeptin to 4'-methoxycyclopenin. The following conversion of 4'-methoxycyclopenin into 4'-methoxyviridicatin is catalyzed by the cyclopenase asqI. 4'-methoxyviridicatin is the precursor of quinolone natural products, and is further converted to quinolinone B. The prenyltransferase asqH1 then catalyzes the canonical Friedel-Crafts alkylation of quinolinone B with dimethylallyl cation to yield dimethylallyl quinolone, which is subjected to FAD-dependent dehydrogenation by the FAD-linked oxidoreductase asqF to yield conjugated aryl diene. The delta(3') double bond then serves as the site of the second alkylation with DMAPP catalyzed by the prenyltransferase asqH2 to yield a carbenium ion intermediate, which can be attacked by H(2)O to yield a styrenyl quinolone containing a C3'-hydroxyprenyl chain. The FAD-dependent monooxygenase asqG performs epoxidation of the terminal C7'-C8' olefin. Finally, after dehydratation of the epoxide at C3 by asqC, the quinolone epoxide rearrangement protein asqO catalyzes an enzymatic 3-exo-tet cyclization to yield the cyclopropyl-THF ring system in aspoquinolone. In Emericella nidulans (strain FGSC A4 / ATCC 38163 / CBS 112.46 / NRRL 194 / M139) (Aspergillus nidulans), this protein is Cyclopenase asqI.